A 169-amino-acid polypeptide reads, in one-letter code: Disulfide bond formation protein B (169 aa).

Residues 1–14 (MNNLTLSLRRERRL) are Cytoplasmic-facing. A helical membrane pass occupies residues 15 to 31 (LVLLALVCLALLAGALY). The Periplasmic segment spans residues 32-49 (LQYVKNEDPCPLCIIQRY). Cysteines 41 and 44 form a disulfide. Residues 50-64 (FFVLIAVFAFIGAGM) traverse the membrane as a helical segment. The Cytoplasmic segment spans residues 65-71 (ASGAGVA). Residues 72-89 (VTEALIVLSAAAGVGTAA) form a helical membrane-spanning segment. Over 90–144 (RHLYVQLNPGFSCGFDALQPVVDSLPPARWLPGVFKVAGLCETVYPPIFGILLPG) the chain is Periplasmic. An intrachain disulfide couples Cys-102 to Cys-130. Residues 145–163 (WALIAFVLIAVPVAVSLLR) traverse the membrane as a helical segment. Topologically, residues 164 to 169 (HRGRLR) are cytoplasmic.

It belongs to the DsbB family.

It localises to the cell inner membrane. Required for disulfide bond formation in some periplasmic proteins. Acts by oxidizing the DsbA protein. The polypeptide is Disulfide bond formation protein B (Burkholderia mallei (strain ATCC 23344)).